Reading from the N-terminus, the 507-residue chain is Maturase K (507 aa).

This sequence belongs to the intron maturase 2 family. MatK subfamily.

It is found in the plastid. The protein resides in the chloroplast. Usually encoded in the trnK tRNA gene intron. Probably assists in splicing its own and other chloroplast group II introns. In Cryptomeria japonica (Japanese cedar), this protein is Maturase K.